Consider the following 456-residue polypeptide: Bis(5'-adenosyl)-triphosphatase enpp4 (456 aa).

An N-terminal signal peptide occupies residues 1 to 18 (MFNMKILVIPLFWGLVTG). The Extracellular segment spans residues 19–410 (YKGNSSDSSA…DQWCINLPEA (392 aa)). Positions 37 and 73 each coordinate Zn(2+). Residue Thr73 is the AMP-threonine intermediate of the active site. A substrate-binding site is contributed by Asn94. The N-linked (GlcNAc...) asparagine glycan is linked to Asn148. Residue Tyr157 coordinates substrate. N-linked (GlcNAc...) asparagine glycosylation occurs at Asn169. Residues Asp192, His196, Asp240, and His241 each coordinate Zn(2+). Substrate is bound at residue Asp192. A disulfide bridge links Cys257 with Cys290. N-linked (GlcNAc...) asparagine glycosylation is found at Asn279 and Asn330. Residue His339 coordinates Zn(2+). An N-linked (GlcNAc...) asparagine glycan is attached at Asn389. Cys397 and Cys404 are disulfide-bonded. A helical transmembrane segment spans residues 411-431 (IGIVVSALLVLTMLTGLMIFM). The Cytoplasmic portion of the chain corresponds to 432 to 456 (RSRASTSRPFSRLQLQEDDDDPLID).

The protein belongs to the nucleotide pyrophosphatase/phosphodiesterase family. It depends on Zn(2+) as a cofactor.

Its subcellular location is the cell membrane. The enzyme catalyses P(1),P(3)-bis(5'-adenosyl) triphosphate + H2O = AMP + ADP + 2 H(+). In terms of biological role, hydrolyzes extracellular Ap3A into AMP and ADP, and Ap4A into AMP and ATP. Ap3A and Ap4A are diadenosine polyphosphates thought to induce proliferation of vascular smooth muscle cells. Acts as a procoagulant, mediating platelet aggregation at the site of nascent thrombus via release of ADP from Ap3A and activation of ADP receptors. The polypeptide is Bis(5'-adenosyl)-triphosphatase enpp4 (Enpp4) (Mus musculus (Mouse)).